The following is a 188-amino-acid chain: MNITATVLLAFGMSMDAFAASIGKGATLHKPKFSEALRTGLIFGAVETLTPLIGWGMGMLASRFVLEWNHWIAFVLLIFLGGRMIIEGFRGPDDEDEEPRRRHGFWLLVTTAIATSLDAMAVGVGLAFLQVNIIATALAIGCATLIMSTLGMMVGRFIGSIIGKKAEILGGLVLIGIGVQILWTHFHG.

The next 5 helical transmembrane spans lie at 3-23 (ITATVLLAFGMSMDAFAASIG), 66-86 (LEWNHWIAFVLLIFLGGRMII), 106-128 (WLLVTTAIATSLDAMAVGVGLAF), 143-163 (ATLIMSTLGMMVGRFIGSIIG), and 168-188 (ILGGLVLIGIGVQILWTHFHG).

The protein belongs to the MntP (TC 9.B.29) family.

The protein localises to the cell inner membrane. Probably functions as a manganese efflux pump. This chain is Probable manganese efflux pump MntP, found in Escherichia coli O7:K1 (strain IAI39 / ExPEC).